The primary structure comprises 149 residues: MSLQRPNGNSSSSSSHKKHKTEESDEELLMVPDMEAAGSTCVLSSSADDGVNNPELDQTQNGVSTAKRRRGRNPVDKEYRSLKRLLRNRVSAQQARERKKVYVSDLESRANELQNNNDQLEEKISTLTNENTMLRKMLINTRPKTDDNH.

The tract at residues 1–77 (MSLQRPNGNS…RRRGRNPVDK (77 aa)) is disordered. Positions 23–36 (ESDEELLMVPDMEA) are interaction with COP1. Residue Ser-24 is modified to Phosphoserine. The segment covering 55–64 (ELDQTQNGVS) has biased composition (polar residues). Residues 78–141 (EYRSLKRLLR…TMLRKMLINT (64 aa)) enclose the bZIP domain. Residues 80-100 (RSLKRLLRNRVSAQQARERKK) are basic motif. Residues 106–134 (LESRANELQNNNDQLEEKISTLTNENTML) form a leucine-zipper region.

Belongs to the bZIP family. Heterodimer; heterodimerizes with HY5 via the leucine-zipper domains. Interacts with COP1 WD40 domain. Interacts with BBX24/STO and BBX25/STH. Post-translationally, ubiquitinated by COP1. Ubiquitination takes place in darkness and leads to its subsequent degradation, thereby preventing the activation of photomorphogenesis signals.

The protein localises to the nucleus. Transcription factor that promotes photomorphogenesis in light. Acts downstream of the light receptor network and directly affects transcription of light-induced genes. Specifically involved in the blue light specific pathway, suggesting that it participates in transmission of cryptochromes (CRY1 and CRY2) signals to downstream responses. In darkness, its degradation prevents the activation of light-induced genes. The sequence is that of Transcription factor HY5-like (HYH) from Arabidopsis thaliana (Mouse-ear cress).